The primary structure comprises 296 residues: Coiled-coil domain-containing protein 69 (296 aa).

Residues 1–18 (MGCRHSRLSSCKPPKKKR) are compositionally biased toward basic residues. Residues 1 to 41 (MGCRHSRLSSCKPPKKKRQEPEPEQPPRPEPHELGPLNGDT) form a disordered region. Glycine 2 carries the N-myristoyl glycine lipid modification. Over residues 19–33 (QEPEPEQPPRPEPHE) the composition is skewed to basic and acidic residues. The stretch at 48-272 (CASEEAERHQ…QEKEELLYRV (225 aa)) forms a coiled coil. Phosphoserine is present on residues serine 154 and serine 241.

This sequence belongs to the CCDC69 family. Highly expressed in duodenum, esophagus, pancreas, prostate, salivary gland, thymus and urinary bladder.

It localises to the cytoplasm. The protein resides in the cytoskeleton. It is found in the spindle. Its subcellular location is the midbody. Its function is as follows. May act as a scaffold to regulate the recruitment and assembly of spindle midzone components. Required for the localization of AURKB and PLK1 to the spindle midzone. In Homo sapiens (Human), this protein is Coiled-coil domain-containing protein 69.